Consider the following 425-residue polypeptide: Glucose-6-phosphate 1-dehydrogenase (425 aa).

NADP(+)-binding residues include Arg-44 and Lys-135. 4 residues coordinate substrate: His-165, Lys-169, Glu-201, and Asp-220. Residue His-225 is the Proton acceptor of the active site. A substrate-binding site is contributed by Lys-311.

The protein belongs to the glucose-6-phosphate dehydrogenase family.

The catalysed reaction is D-glucose 6-phosphate + NADP(+) = 6-phospho-D-glucono-1,5-lactone + NADPH + H(+). It functions in the pathway carbohydrate degradation; pentose phosphate pathway; D-ribulose 5-phosphate from D-glucose 6-phosphate (oxidative stage): step 1/3. Its function is as follows. Catalyzes the oxidation of glucose 6-phosphate to 6-phosphogluconolactone. In Helicobacter pylori (strain ATCC 700392 / 26695) (Campylobacter pylori), this protein is Glucose-6-phosphate 1-dehydrogenase.